Here is a 940-residue protein sequence, read N- to C-terminus: Isoleucine--tRNA ligase (940 aa).

A 'HIGH' region motif is present at residues 58–68 (PYANGSIHIGH). E563 is a binding site for L-isoleucyl-5'-AMP. Residues 604-608 (KMSKS) carry the 'KMSKS' region motif. Position 607 (K607) interacts with ATP. Zn(2+)-binding residues include C902, C905, C922, and C925.

The protein belongs to the class-I aminoacyl-tRNA synthetase family. IleS type 1 subfamily. Monomer. Zn(2+) is required as a cofactor.

Its subcellular location is the cytoplasm. It catalyses the reaction tRNA(Ile) + L-isoleucine + ATP = L-isoleucyl-tRNA(Ile) + AMP + diphosphate. Functionally, catalyzes the attachment of isoleucine to tRNA(Ile). As IleRS can inadvertently accommodate and process structurally similar amino acids such as valine, to avoid such errors it has two additional distinct tRNA(Ile)-dependent editing activities. One activity is designated as 'pretransfer' editing and involves the hydrolysis of activated Val-AMP. The other activity is designated 'posttransfer' editing and involves deacylation of mischarged Val-tRNA(Ile). This is Isoleucine--tRNA ligase from Marinomonas sp. (strain MWYL1).